Consider the following 86-residue polypeptide: Small ribosomal subunit protein bS20 (86 aa).

It belongs to the bacterial ribosomal protein bS20 family.

Its function is as follows. Binds directly to 16S ribosomal RNA. The sequence is that of Small ribosomal subunit protein bS20 from Mycolicibacterium gilvum (strain PYR-GCK) (Mycobacterium gilvum (strain PYR-GCK)).